The primary structure comprises 126 residues: Holo-[acyl-carrier-protein] synthase (126 aa).

Positions 9 and 58 each coordinate Mg(2+).

This sequence belongs to the P-Pant transferase superfamily. AcpS family. The cofactor is Mg(2+).

The protein localises to the cytoplasm. It carries out the reaction apo-[ACP] + CoA = holo-[ACP] + adenosine 3',5'-bisphosphate + H(+). In terms of biological role, transfers the 4'-phosphopantetheine moiety from coenzyme A to a Ser of acyl-carrier-protein. The chain is Holo-[acyl-carrier-protein] synthase from Salmonella newport (strain SL254).